The sequence spans 581 residues: Suppressor of cytokine signaling 7 (581 aa).

Disordered regions lie at residues 1–23 (MVFRNVGRPPEEEDVEAAPEPGP), 89–109 (PPPPQPQPPAAAPQAGEDPTE), 123–272 (EAES…RTQS), and 297–316 (QRGLTSPHPPTPPPPPRRSL). Composition is skewed to pro residues over residues 89 to 99 (PPPPQPQPPAA), 154 to 164 (PPGPELPPVPF), and 187 to 198 (QPPPPPPPPGPL). The interval 124 to 494 (AESLETNSCS…GKFLYFLRSR (371 aa)) is mediates interaction with SORBS3. Positions 208 to 219 (GSFKIRLSRLFR) are enriched in basic residues. The span at 303–313 (PHPPTPPPPPR) shows a compositional bias: pro residues. The SH2 domain occupies 400-509 (WYWGPMNWED…PTPVQLLYPV (110 aa)). One can recognise an SOCS box domain in the interval 504–554 (QLLYPVSRFSNVKSLQHLCRFRIRQLVRIDHIPDLPLPKPLISYIRKFYYY).

As to quaternary structure, substrate-recognition component of the ECS(SOCS7) complex, composed of SOCS7, CUL5, ELOB, ELOC and RNF7/RBX2. Interacts, via the third proline-rich region, with the second SH3 domain of the adapter protein NCK1. Also interacts with GRB2, INSR, PLCG1, SORBS3/vinexin, and phosphorylated STAT3 and STAT5. Interacts with SEPT6. Interacts with phosphorylated IRS4 and PIK3R1. As to expression, expressed in brain and leukocytes. Also in fetal lung fibroblasts and fetal brain.

Its subcellular location is the cytoplasm. It localises to the nucleus. It is found in the cell membrane. It functions in the pathway protein modification; protein ubiquitination. Functionally, substrate-recognition component of a cullin-5-RING E3 ubiquitin-protein ligase complex (ECS complex, also named CRL5 complex), which mediates the ubiquitination and subsequent proteasomal degradation of target proteins, such as DAB1 and IRS1. Specifically recognizes and binds phosphorylated proteins via its SH2 domain, promoting their ubiquitination. The ECS(SOCS7) complex acts as a key regulator of reelin signaling by mediating ubiquitination and degradation of phosphorylated DAB1 in the cortical plate of the developing cerebral cortex, thereby regulating neuron positioning during cortex development. Functions in insulin signaling and glucose homeostasis through IRS1 ubiquitination and subsequent proteasomal degradation. Also inhibits prolactin, growth hormone and leptin signaling by preventing STAT3 and STAT5 activation, sequestering them in the cytoplasm and reducing their binding to DNA. The sequence is that of Suppressor of cytokine signaling 7 from Homo sapiens (Human).